The primary structure comprises 195 residues: uncharacterized protein (195 aa).

Disordered regions lie at residues 1 to 54 (MPKG…SNKI) and 173 to 195 (LAGA…KPIS). A compositionally biased stretch (basic and acidic residues) spans 7–20 (KPNEKKEELEKFAK). Positions 45 to 54 (QNDSSSSNKI) are enriched in polar residues. A coiled-coil region spans residues 48–97 (SSSSNKIVLSQAEKDLLRTELDKTEEEISTLKQVLSARQKHAAELKRKLG).

It belongs to the TPD52 family.

This is an uncharacterized protein from Caenorhabditis elegans.